The primary structure comprises 471 residues: Lincomycin resistance protein LmrB (471 aa).

12 helical membrane-spanning segments follow: residues 13–35, 55–77, 84–106, 111–133, 140–162, 167–189, 201–223, 227–249, 269–291, 329–351, 358–380, and 445–467; these read PIPI…TALN, LTTG…LQWF, FTAV…FAML, VVQA…LIFP, AMGM…SGLI, TWNW…GMKF, IDIL…FSSA, GWGS…LFVW, FTLG…ILLP, AYGP…FFLT, SALT…MMPA, and GIQN…SLFI.

This sequence belongs to the major facilitator superfamily. EmrB family.

It localises to the cell membrane. Proton-dependent transporter. May mediate the efflux of lincomycin. The chain is Lincomycin resistance protein LmrB (lmrB) from Listeria monocytogenes serovar 1/2a (strain ATCC BAA-679 / EGD-e).